The sequence spans 479 residues: Glycine betaine methyltransferase (479 aa).

The protein belongs to the trimethylamine methyltransferase family.

The catalysed reaction is Co(I)-[glycine betaine-specific corrinoid protein] + glycine betaine + H(+) = methyl-Co(III)-[glycine betaine-specific corrinoid protein] + N,N-dimethylglycine. Functionally, methyltransferase able to methylate free cob(I)alamin in vitro, using glycine betaine as the methyl donor, yealding methylcobalamin (methylCbl) and dimethylglycine. In vivo, probably carries out the methylation of a corrinoid protein, likely the adjacently encoded DSY3155, with glycine betaine, to then supply methyl groups to tetrahydrofolate (THF) for ultimate conversion to carbon dioxide; oxidation of the methyl group would also provide reducing equivalents for anaerobic respiration. Thus, may function in the pathway that allows anaerobic methylotrophic growth of D.hafniense using glycine betaine. Cannot use quaternary amines such as carnitine and choline as substrates, nor tertiary amines such as dimethylglycine or trimethylamine. This chain is Glycine betaine methyltransferase, found in Desulfitobacterium hafniense (strain Y51).